We begin with the raw amino-acid sequence, 355 residues long: Sesquiterpene synthase MAJ_08936 (355 aa).

2 residues coordinate Mg(2+): Asp91 and Asp96. The short motif at 91–96 (DDLFVD) is the DDXXXD motif element. Arg184 provides a ligand contact to substrate. Mg(2+)-binding residues include Asn230, Ser234, and Glu238.

The protein belongs to the terpene synthase family. The cofactor is Mg(2+).

The enzyme catalyses (2E,6E)-farnesyl diphosphate + H2O = (+)-corvol ether B + diphosphate. It carries out the reaction (2E,6E)-farnesyl diphosphate + H2O = (+)-corvol ether A + diphosphate. Terpene synthase that catalyzes the conversion of (2E,6E)-farnesyl diphosphate (FPP) into sesquiterpenes which are important for fungi-environment interactions. Produces a mixture consisting of 8 sesquiterpenes including corvol ethers A and B, as well as traces of epizonarene, gamma-cadinene, delta-cadinene, alpha-cadinene, alpha-cadinol, and an unidentified sesquiterpene. The major product is corvol ether A. This is Sesquiterpene synthase MAJ_08936 from Metarhizium majus (strain ARSEF 297).